The following is a 224-amino-acid chain: Claudin-19 (224 aa).

Residues 1–7 lie on the Cytoplasmic side of the membrane; the sequence is MANSGLQ. A helical transmembrane segment spans residues 8–28; sequence LLGYFLALGGWVGIIASTALP. The Extracellular segment spans residues 29 to 81; sequence QWKQSSYAGDAIITAVGLYEGLWMSCASQSTGQVQCKLYDSLLALDGHIQSAR. An intrachain disulfide couples Cys-54 to Cys-64. A helical transmembrane segment spans residues 82–102; sequence ALMVVAVLLGFVAMVLSVVGM. The Cytoplasmic segment spans residues 103 to 117; that stretch reads KCTRVGDSNPTAKGR. A helical membrane pass occupies residues 118–138; the sequence is VAISGGALFLLAGLCTLTAVS. Residues 139–160 lie on the Extracellular side of the membrane; sequence WYATLVTQEFFNPSTPVNARYE. Residues 161–181 form a helical membrane-spanning segment; that stretch reads FGPALFVGWASAGLAILGGSF. Residues 182-224 are Cytoplasmic-facing; that stretch reads LCCTCPEPERANSIPQPYRSGPSTAAREPVVKLSTSVKGPLGV.

This sequence belongs to the claudin family. As to quaternary structure, can form homo- and heteropolymeric tight junction strands. Interacts with other claudins including CLDN3, CLDN10, CLDN16 and CLDN18 with highest affinity for CLDN16. Interacts (via PDZ-binding motif TRV) with TJP1 (via PDZ domain).

Its subcellular location is the cell junction. The protein resides in the tight junction. It is found in the cell membrane. The catalysed reaction is Mg(2+)(in) = Mg(2+)(out). It catalyses the reaction Ca(2+)(in) = Ca(2+)(out). The enzyme catalyses Na(+)(in) = Na(+)(out). It carries out the reaction K(+)(in) = K(+)(out). The catalysed reaction is Rb(+)(in) = Rb(+)(out). It catalyses the reaction Cs(+)(in) = Cs(+)(out). The enzyme catalyses Li(+)(in) = Li(+)(out). Functionally, forms paracellular channels: coassembles with CLDN16 into tight junction strands with cation-selective channels through the strands, conveying epithelial permeability in a process known as paracellular tight junction permeability. Involved in the maintenance of ion gradients along the nephron. In the thick ascending limb (TAL) of Henle's loop, facilitates sodium paracellular permeability from the interstitial compartment to the lumen, contributing to the lumen-positive transepithelial potential that drives paracellular magnesium and calcium reabsorption. Forms paracellular barriers on its own. In the peripheral nervous system, represents a major constituent of the tight junctions in Schwann cells and contributes to electrical sealing. During retinal neurogenesis, may regulate the barrier properties of tight junctions in retinal pigment epithelium, required for proper retinal tissue differentiation and vision. The chain is Claudin-19 from Rattus norvegicus (Rat).